The following is a 105-amino-acid chain: Iron-sulfur cluster assembly protein CyaY (105 aa).

The protein belongs to the frataxin family.

In terms of biological role, involved in iron-sulfur (Fe-S) cluster assembly. May act as a regulator of Fe-S biogenesis. The chain is Iron-sulfur cluster assembly protein CyaY from Paraburkholderia phytofirmans (strain DSM 17436 / LMG 22146 / PsJN) (Burkholderia phytofirmans).